Reading from the N-terminus, the 278-residue chain is Delta(3,5)-Delta(2,4)-dienoyl-CoA isomerase, peroxisomal (278 aa).

Position 1 is an N-acetylmethionine (Met-1). Substrate contacts are provided by residues Ser-69 to Leu-73 and Gly-128. A Microbody targeting signal motif is present at residues Ala-276–Leu-278.

The protein belongs to the enoyl-CoA hydratase/isomerase family. As to expression, expressed in roots, leaves, stems and flowers.

The protein localises to the peroxisome. The catalysed reaction is a (3E,5Z)-dienoyl-CoA = a (2E,4E)-(5,6-saturated)-dienoyl-CoA. It functions in the pathway lipid metabolism; fatty acid beta-oxidation. Converts 3,5-dienoyl-CoAs to the corresponding 2,4-dienoyl-CoAs. Involved in degradation of unsaturated fatty acids. The polypeptide is Delta(3,5)-Delta(2,4)-dienoyl-CoA isomerase, peroxisomal (Arabidopsis thaliana (Mouse-ear cress)).